The sequence spans 430 residues: GTPase Obg (430 aa).

An Obg domain is found at 1–158 (MFVDQVTISL…LDVTLELKLL (158 aa)). The interval 118-145 (RGGRGGRGNSRFATPRNPAPDFSENGEP) is disordered. The region spanning 159–329 (ADVGLVGFPS…LLYAIADKLD (171 aa)) is the OBG-type G domain. GTP-binding positions include 165–172 (GFPSVGKS), 190–194 (FTTIK), 212–215 (DLPG), 282–285 (NKMD), and 310–312 (STI). 2 residues coordinate Mg(2+): Ser172 and Thr192. The OCT domain maps to 352–430 (KHTPSQDKFT…ILGGEFEFVE (79 aa)).

It belongs to the TRAFAC class OBG-HflX-like GTPase superfamily. OBG GTPase family. As to quaternary structure, monomer. Requires Mg(2+) as cofactor.

It localises to the cytoplasm. In terms of biological role, an essential GTPase which binds GTP, GDP and possibly (p)ppGpp with moderate affinity, with high nucleotide exchange rates and a fairly low GTP hydrolysis rate. Plays a role in control of the cell cycle, stress response, ribosome biogenesis and in those bacteria that undergo differentiation, in morphogenesis control. The protein is GTPase Obg of Staphylococcus haemolyticus (strain JCSC1435).